The primary structure comprises 380 residues: MNYFITFFFMHIAVLNFYFRFSNGNKIVMRVGGSPETKRLERSKRQALRMDNEPRWPRGTINYFFDEQRFDENSRATVLRAMEKISNHTCIKFSPKDARIKLRIVSDKGCQAAIGRVGGDQQYLSFPTSCYSVGSASELIHVIGFLHSHQRADRDEYLKLNLQPWRLNDWFQTMQYKKYLDQWWIVPYDYGSIMQYHDSDNEYGPKNSKYFRTMGSQIPSYFDYLMINEYYQCSCEGEEQINCKNRGYPNPGNCSECNCPLESSEEWKNITLNLDAGYMSLQNGTKLHQIDFVFRYLSISAPANKTIEVDIREITGVECNYGCYIGGIEVKTHEDRRMTSPRLCCKNDNEIYKSRNNPTIVMAFNSEGLDKYNIFYRFTD.

The first 24 residues, 1-24, serve as a signal peptide directing secretion; that stretch reads MNYFITFFFMHIAVLNFYFRFSNG. The region spanning 46–234 is the Peptidase M12A domain; that stretch reads QALRMDNEPR…LMINEYYQCS (189 aa). An N-linked (GlcNAc...) asparagine glycan is attached at Asn-87. 2 cysteine pairs are disulfide-bonded: Cys-90/Cys-233 and Cys-110/Cys-130. Glu-138 is a catalytic residue. Asn-253, Asn-269, Asn-283, and Asn-304 each carry an N-linked (GlcNAc...) asparagine glycan.

The protein resides in the secreted. Its function is as follows. May lack metalloprotease activity. The protein is Zinc metalloproteinase-like protein nas-21 (nas-21) of Caenorhabditis elegans.